A 194-amino-acid polypeptide reads, in one-letter code: ATP-dependent Clp protease proteolytic subunit 4 (194 aa).

Ser-100 serves as the catalytic Nucleophile. His-125 is a catalytic residue.

The protein belongs to the peptidase S14 family. In terms of assembly, fourteen ClpP subunits assemble into 2 heptameric rings which stack back to back to give a disk-like structure with a central cavity, resembling the structure of eukaryotic proteasomes.

It is found in the cytoplasm. The enzyme catalyses Hydrolysis of proteins to small peptides in the presence of ATP and magnesium. alpha-casein is the usual test substrate. In the absence of ATP, only oligopeptides shorter than five residues are hydrolyzed (such as succinyl-Leu-Tyr-|-NHMec, and Leu-Tyr-Leu-|-Tyr-Trp, in which cleavage of the -Tyr-|-Leu- and -Tyr-|-Trp bonds also occurs).. Functionally, cleaves peptides in various proteins in a process that requires ATP hydrolysis. Has a chymotrypsin-like activity. Plays a major role in the degradation of misfolded proteins. In Rhodococcus jostii (strain RHA1), this protein is ATP-dependent Clp protease proteolytic subunit 4.